The sequence spans 289 residues: Formamidopyrimidine-DNA glycosylase (289 aa).

Pro2 acts as the Schiff-base intermediate with DNA in catalysis. The active-site Proton donor is the Glu3. Catalysis depends on Lys60, which acts as the Proton donor; for beta-elimination activity. DNA contacts are provided by His94, Arg126, and Arg167. Residues 252 to 287 (QVYGKPAGTPCPRCGTGLARIRIAGRSSVFCPRCQP) form an FPG-type zinc finger. Catalysis depends on Arg277, which acts as the Proton donor; for delta-elimination activity.

Belongs to the FPG family. As to quaternary structure, monomer. Zn(2+) is required as a cofactor.

It catalyses the reaction Hydrolysis of DNA containing ring-opened 7-methylguanine residues, releasing 2,6-diamino-4-hydroxy-5-(N-methyl)formamidopyrimidine.. It carries out the reaction 2'-deoxyribonucleotide-(2'-deoxyribose 5'-phosphate)-2'-deoxyribonucleotide-DNA = a 3'-end 2'-deoxyribonucleotide-(2,3-dehydro-2,3-deoxyribose 5'-phosphate)-DNA + a 5'-end 5'-phospho-2'-deoxyribonucleoside-DNA + H(+). Involved in base excision repair of DNA damaged by oxidation or by mutagenic agents. Acts as a DNA glycosylase that recognizes and removes damaged bases. Has a preference for oxidized purines, such as 7,8-dihydro-8-oxoguanine (8-oxoG). Has AP (apurinic/apyrimidinic) lyase activity and introduces nicks in the DNA strand. Cleaves the DNA backbone by beta-delta elimination to generate a single-strand break at the site of the removed base with both 3'- and 5'-phosphates. This is Formamidopyrimidine-DNA glycosylase from Thermomicrobium roseum (strain ATCC 27502 / DSM 5159 / P-2).